We begin with the raw amino-acid sequence, 119 residues long: MMNKKDARLRRARQTRAKIAELKVNRLTVFRTNSNIYAQVFSECGTKVLASASTVEAEVRKELEGKGATAAAATVVGKRIAEKAKAAGVETVAFDRAGFRFHGRVKALADAAREAGLKF.

This sequence belongs to the universal ribosomal protein uL18 family. In terms of assembly, part of the 50S ribosomal subunit; part of the 5S rRNA/L5/L18/L25 subcomplex. Contacts the 5S and 23S rRNAs.

This is one of the proteins that bind and probably mediate the attachment of the 5S RNA into the large ribosomal subunit, where it forms part of the central protuberance. The polypeptide is Large ribosomal subunit protein uL18 (Cupriavidus taiwanensis (strain DSM 17343 / BCRC 17206 / CCUG 44338 / CIP 107171 / LMG 19424 / R1) (Ralstonia taiwanensis (strain LMG 19424))).